The sequence spans 806 residues: Leucine--tRNA ligase (806 aa).

Positions Ser54 to His64 match the 'HIGH' region motif. Residues Lys571–Ser575 carry the 'KMSKS' region motif. Residue Lys574 participates in ATP binding.

Belongs to the class-I aminoacyl-tRNA synthetase family.

It localises to the cytoplasm. The catalysed reaction is tRNA(Leu) + L-leucine + ATP = L-leucyl-tRNA(Leu) + AMP + diphosphate. In Tropheryma whipplei (strain Twist) (Whipple's bacillus), this protein is Leucine--tRNA ligase.